The chain runs to 576 residues: Ferroportin (576 aa).

Residues 1 to 23 (MPKAGEQARQGGCCGSLANYLTS) are Cytoplasmic-facing. Residues 24 to 53 (AKFLLYLGHSLSTWGDRMWHFAVSVFLVEL) form a helical membrane-spanning segment. 2 residues coordinate Fe cation: Asp-39 and His-43. Residues 54–57 (YGNS) are Extracellular-facing. Residues 58 to 84 (LLLTAVYGLVVAGSVLVLGAIIGDWVD) traverse the membrane as a helical segment. Over 85 to 87 (KNA) the chain is Cytoplasmic. A helical membrane pass occupies residues 88-118 (RLKVAQTSLVVQNVSVILCGIILMMVFLHKN). Topologically, residues 119–126 (ELLTMYHG) are extracellular. A helical transmembrane segment spans residues 127–162 (WVLTFCYILIITIADVANLASTATAITIQRDWIVVV). The Cytoplasmic segment spans residues 163 to 164 (AG). The chain crosses the membrane as a helical span at residues 165-195 (GDRSKLADMNATIRRIDQLTNILAPMAVGQI). The Extracellular segment spans residues 196-202 (MTFGSAV). A helical transmembrane segment spans residues 203–229 (IGCGFISGWNLVSMCVEYFLLWKVYQK). Residues 230 to 306 (TPALAVKAAL…DGWVSYYNQS (77 aa)) lie on the Cytoplasmic side of the membrane. A helical membrane pass occupies residues 307-333 (VFLAGMGLAFLYMTVLGFDCITTGYAY). Cys-326 contributes to the Fe cation binding site. Residues 334 to 338 (TQGLS) are Extracellular-facing. Residues 339–366 (GSILSILMGASAITGIMGTVAFTWLRRK) traverse the membrane as a helical segment. The Cytoplasmic segment spans residues 367–368 (CG). A helical transmembrane segment spans residues 369 to 391 (LVRTGLISGFAQLSCLILCVISV). The Extracellular segment spans residues 392-458 (FMPGSPLDLS…ETTPKSVPII (67 aa)). The N-linked (GlcNAc...) asparagine glycan is linked to Asn-439. Residues 459–488 (SVSLLFAGVIAARIGLWSFDLTVTQLLQEN) traverse the membrane as a helical segment. The Cytoplasmic portion of the chain corresponds to 489–493 (VIESE). Residues 494-518 (RGIINGVQNSMNYLLDLLHFIMVIL) traverse the membrane as a helical segment. Residue His-512 participates in Fe cation binding. The Extracellular segment spans residues 519-521 (APN). Residues 522–547 (PEAFGLLVLISVSFVAMGHIMYFRFA) traverse the membrane as a helical segment. At 548 to 576 (QKTLGSKLFACGADDEEVTNENQANTSVV) the chain is on the cytoplasmic side.

It belongs to the ferroportin (FP) (TC 2.A.100) family. SLC40A subfamily. Identified in a complex with STOM. Interacts with HAMP; affinity of the peptide hormone HAMP for SLC40A1 increases by 80-fold in the presence of iron and the interaction promotes SLC40A1 ubiquitination and degradation. Part of a complex composed of SLC40A1/ferroportin, TF/transferrin and HEPH/hephaestin that transfers iron from cells to transferrin. Post-translationally, polyubiquitinated by RNF217; leading to proteasomal degradation. Under conditions of high systemic iron levels, both the hormone peptide hepcidin/HAMP and holo(iron bound)-transferrin/TF induce the ubiquitination, internalization and proteasomal degradation of SLC40A1 to control iron release from cells.

Its subcellular location is the cell membrane. The protein localises to the basolateral cell membrane. The catalysed reaction is Fe(2+)(in) = Fe(2+)(out). With respect to regulation, during elevated serum iron levels, liver-derived hepcidin/HAMP negatively regulates cell surface ferroportin/SLC40A1 by inducing its ubiquitination, internalization, and degradation. Indeed, hepcidin/HAMP affinity towards ferroportin/SLC40A1 increases by 80-fold in the presence of iron. Its function is as follows. Transports Fe(2+) from the inside of a cell to the outside of the cell, playing a key role for maintaining systemic iron homeostasis. Transports iron from intestinal, splenic, hepatic cells, macrophages and erythrocytes into the blood to provide iron to other tissues. Controls therefore dietary iron uptake, iron recycling by macrophages and erythrocytes, and release of iron stores in hepatocytes. When iron is in excess in serum, circulating HAMP/hepcidin levels increase resulting in a degradation of SLC40A1, thus limiting the iron efflux to plasma. The polypeptide is Ferroportin (Canis lupus familiaris (Dog)).